We begin with the raw amino-acid sequence, 255 residues long: Diphthine synthase (255 aa).

S-adenosyl-L-methionine-binding positions include leucine 9, aspartate 85, valine 88, 113–114, leucine 164, alanine 207, and histidine 232; that span reads SI.

This sequence belongs to the diphthine synthase family. Homodimer.

It catalyses the reaction 2-[(3S)-amino-3-carboxypropyl]-L-histidyl-[translation elongation factor 2] + 3 S-adenosyl-L-methionine = diphthine-[translation elongation factor 2] + 3 S-adenosyl-L-homocysteine + 3 H(+). It participates in protein modification; peptidyl-diphthamide biosynthesis. Functionally, S-adenosyl-L-methionine-dependent methyltransferase that catalyzes the trimethylation of the amino group of the modified target histidine residue in translation elongation factor 2 (EF-2), to form an intermediate called diphthine. The three successive methylation reactions represent the second step of diphthamide biosynthesis. This is Diphthine synthase from Methanococcus vannielii (strain ATCC 35089 / DSM 1224 / JCM 13029 / OCM 148 / SB).